The chain runs to 332 residues: Ketol-acid reductoisomerase (NADP(+)) 1 (332 aa).

The KARI N-terminal Rossmann domain occupies 2–182 (AELFYDADAD…GGTRAGVIKT (181 aa)). Residues 25 to 28 (YGSQ), Ser-51, Ser-53, and 83 to 86 (DPIQ) each bind NADP(+). The active site involves His-108. Gly-134 serves as a coordination point for NADP(+). The KARI C-terminal knotted domain occupies 183-328 (TFTEETETDL…KELRKLMSWV (146 aa)). Mg(2+)-binding residues include Asp-191, Glu-195, Glu-227, and Glu-231. Ser-252 provides a ligand contact to substrate.

This sequence belongs to the ketol-acid reductoisomerase family. It depends on Mg(2+) as a cofactor.

It catalyses the reaction (2R)-2,3-dihydroxy-3-methylbutanoate + NADP(+) = (2S)-2-acetolactate + NADPH + H(+). The enzyme catalyses (2R,3R)-2,3-dihydroxy-3-methylpentanoate + NADP(+) = (S)-2-ethyl-2-hydroxy-3-oxobutanoate + NADPH + H(+). Its pathway is amino-acid biosynthesis; L-isoleucine biosynthesis; L-isoleucine from 2-oxobutanoate: step 2/4. It participates in amino-acid biosynthesis; L-valine biosynthesis; L-valine from pyruvate: step 2/4. Its function is as follows. Involved in the biosynthesis of branched-chain amino acids (BCAA). Catalyzes an alkyl-migration followed by a ketol-acid reduction of (S)-2-acetolactate (S2AL) to yield (R)-2,3-dihydroxy-isovalerate. In the isomerase reaction, S2AL is rearranged via a Mg-dependent methyl migration to produce 3-hydroxy-3-methyl-2-ketobutyrate (HMKB). In the reductase reaction, this 2-ketoacid undergoes a metal-dependent reduction by NADPH to yield (R)-2,3-dihydroxy-isovalerate. This Streptomyces coelicolor (strain ATCC BAA-471 / A3(2) / M145) protein is Ketol-acid reductoisomerase (NADP(+)) 1.